The following is a 269-amino-acid chain: Histone deacetylase HDT1 (269 aa).

The disordered stretch occupies residues 97–269 (PFEEEEDDED…HSKAKHSAGK (173 aa)). Acidic residues-rich tracts occupy residues 98-115 (FEEE…DEDI) and 153-179 (KDDE…DSEE). The span at 228 to 238 (PSKQASKTPKS) shows a compositional bias: polar residues. Residues 242 to 265 (HHCKPCNRSFGSEGALDSHSKAKH) form a C2H2-type zinc finger.

It belongs to the histone deacetylase HD2 family. In terms of tissue distribution, predominantly expressed in ovaries. Accumulates predominantly in the micropylar region of the ovule's integument.

Its subcellular location is the nucleus. The protein resides in the nucleolus. Functionally, mediates the deacetylation of lysine residues on the N-terminal part of the core histones (H2A, H2B, H3 and H4). Histone deacetylation gives a tag for epigenetic repression and plays an important role in transcriptional regulation, cell cycle progression and developmental events. This is Histone deacetylase HDT1 (HDT1) from Solanum chacoense (Chaco potato).